Here is a 270-residue protein sequence, read N- to C-terminus: Very long chain fatty acid elongase 3 (270 aa).

The N-linked (GlcNAc...) asparagine glycan is linked to asparagine 6. 2 consecutive transmembrane segments (helical) span residues 29–49 and 63–83; these read FFEEYWATSFPIALIYLVLIA and LQGPLILWSFCLAIFSILGAV. A glycan (N-linked (GlcNAc...) asparagine) is linked at asparagine 110. The next 5 helical transmembrane spans lie at 115–135, 140–160, 164–184, 198–218, and 235–255; these read FWSWVFLLSKVIELGDTAFII, PLIFIHWYHHSTVLVYTSFGY, VPAGGWFVTMNFGVHAIMYTY, LPMLITSLQILQMFVGAIVSI, and HLFWSFILYMTYFILFAHFFC. The Di-lysine motif signature appears at 266 to 270; that stretch reads KTKSQ.

The protein belongs to the ELO family. ELOVL3 subfamily. Interacts with TECR. Post-translationally, N-Glycosylated. In terms of tissue distribution, testis.

Its subcellular location is the endoplasmic reticulum membrane. The enzyme catalyses a very-long-chain acyl-CoA + malonyl-CoA + H(+) = a very-long-chain 3-oxoacyl-CoA + CO2 + CoA. It carries out the reaction eicosanoyl-CoA + malonyl-CoA + H(+) = 3-oxodocosanoyl-CoA + CO2 + CoA. It catalyses the reaction hexadecanoyl-CoA + malonyl-CoA + H(+) = 3-oxooctadecanoyl-CoA + CO2 + CoA. The catalysed reaction is octadecanoyl-CoA + malonyl-CoA + H(+) = 3-oxoeicosanoyl-CoA + CO2 + CoA. The enzyme catalyses (9Z)-octadecenoyl-CoA + malonyl-CoA + H(+) = 3-oxo-(11Z)-eicosenoyl-CoA + CO2 + CoA. It carries out the reaction (9Z,12Z)-octadecadienoyl-CoA + malonyl-CoA + H(+) = (11Z,14Z)-3-oxoicosa-11,14-dienoyl-CoA + CO2 + CoA. It catalyses the reaction (9Z,12Z,15Z)-octadecatrienoyl-CoA + malonyl-CoA + H(+) = (11Z,14Z,17Z)-3-oxoeicosatrienoyl-CoA + CO2 + CoA. The catalysed reaction is docosanoyl-CoA + malonyl-CoA + H(+) = 3-oxotetracosanoyl-CoA + CO2 + CoA. The enzyme catalyses tetradecanoyl-CoA + malonyl-CoA + H(+) = 3-oxohexadecanoyl-CoA + CO2 + CoA. It participates in lipid metabolism; polyunsaturated fatty acid biosynthesis. In terms of biological role, catalyzes the first and rate-limiting reaction of the four reactions that constitute the long-chain fatty acids elongation cycle. This endoplasmic reticulum-bound enzymatic process allows the addition of 2 carbons to the chain of long- and very long-chain fatty acids (VLCFAs) per cycle. Condensing enzyme that exhibits activity toward saturated and unsaturated acyl-CoA substrates with higher activity toward C18 acyl-CoAs, especially C18:0 acyl-CoAs. May participate in the production of saturated and monounsaturated VLCFAs of different chain lengths that are involved in multiple biological processes as precursors of membrane lipids and lipid mediators. The polypeptide is Very long chain fatty acid elongase 3 (Homo sapiens (Human)).